A 673-amino-acid chain; its full sequence is DNA ligase (673 aa).

Residues 33-37 (DHQYD), 83-84 (SL), and E117 each bind NAD(+). The active-site N6-AMP-lysine intermediate is K119. 4 residues coordinate NAD(+): R140, E175, K282, and K306. 4 residues coordinate Zn(2+): C400, C403, C418, and C424. The BRCT domain maps to 592 to 673 (RGSSAISGKT…WVKMVEDARS (82 aa)).

It belongs to the NAD-dependent DNA ligase family. LigA subfamily. Mg(2+) is required as a cofactor. Requires Mn(2+) as cofactor.

The catalysed reaction is NAD(+) + (deoxyribonucleotide)n-3'-hydroxyl + 5'-phospho-(deoxyribonucleotide)m = (deoxyribonucleotide)n+m + AMP + beta-nicotinamide D-nucleotide.. Its function is as follows. DNA ligase that catalyzes the formation of phosphodiester linkages between 5'-phosphoryl and 3'-hydroxyl groups in double-stranded DNA using NAD as a coenzyme and as the energy source for the reaction. It is essential for DNA replication and repair of damaged DNA. The chain is DNA ligase from Anaplasma marginale (strain St. Maries).